Here is a 246-residue protein sequence, read N- to C-terminus: Ribonuclease PH (246 aa).

Residues Arg95 and 133–135 (GTR) contribute to the phosphate site.

The protein belongs to the RNase PH family. As to quaternary structure, homohexameric ring arranged as a trimer of dimers.

It carries out the reaction tRNA(n+1) + phosphate = tRNA(n) + a ribonucleoside 5'-diphosphate. In terms of biological role, phosphorolytic 3'-5' exoribonuclease that plays an important role in tRNA 3'-end maturation. Removes nucleotide residues following the 3'-CCA terminus of tRNAs; can also add nucleotides to the ends of RNA molecules by using nucleoside diphosphates as substrates, but this may not be physiologically important. Probably plays a role in initiation of 16S rRNA degradation (leading to ribosome degradation) during starvation. This chain is Ribonuclease PH, found in Bordetella bronchiseptica (strain ATCC BAA-588 / NCTC 13252 / RB50) (Alcaligenes bronchisepticus).